An 803-amino-acid polypeptide reads, in one-letter code: Phenylalanine--tRNA ligase beta subunit (803 aa).

In terms of domain architecture, tRNA-binding spans alanine 39–alanine 150. One can recognise a B5 domain in the interval alanine 400–leucine 475. Aspartate 453, aspartate 459, glutamate 462, and glutamate 463 together coordinate Mg(2+). The FDX-ACB domain maps to serine 709 to arginine 802.

It belongs to the phenylalanyl-tRNA synthetase beta subunit family. Type 1 subfamily. Tetramer of two alpha and two beta subunits. Mg(2+) serves as cofactor.

The protein localises to the cytoplasm. The enzyme catalyses tRNA(Phe) + L-phenylalanine + ATP = L-phenylalanyl-tRNA(Phe) + AMP + diphosphate + H(+). The sequence is that of Phenylalanine--tRNA ligase beta subunit from Rhodopseudomonas palustris (strain ATCC BAA-98 / CGA009).